The primary structure comprises 297 residues: ATP synthase gamma chain (297 aa).

This sequence belongs to the ATPase gamma chain family. As to quaternary structure, F-type ATPases have 2 components, CF(1) - the catalytic core - and CF(0) - the membrane proton channel. CF(1) has five subunits: alpha(3), beta(3), gamma(1), delta(1), epsilon(1). CF(0) has three main subunits: a, b and c.

The protein resides in the cell membrane. Functionally, produces ATP from ADP in the presence of a proton gradient across the membrane. The gamma chain is believed to be important in regulating ATPase activity and the flow of protons through the CF(0) complex. The protein is ATP synthase gamma chain of Arthrobacter sp. (strain FB24).